A 554-amino-acid chain; its full sequence is Aspartyl/glutamyl-tRNA(Asn/Gln) amidotransferase subunit B (554 aa).

Positions 491-554 (AEQPTAPPPE…TPVSHQDAHA (64 aa)) are disordered. The segment covering 502 to 540 (ESAAETPEAPPAVEDAPPEAPTEAITAEAGSAEAITAAS) has biased composition (low complexity).

Belongs to the GatB/GatE family. GatB subfamily. As to quaternary structure, heterotrimer of A, B and C subunits.

The enzyme catalyses L-glutamyl-tRNA(Gln) + L-glutamine + ATP + H2O = L-glutaminyl-tRNA(Gln) + L-glutamate + ADP + phosphate + H(+). It carries out the reaction L-aspartyl-tRNA(Asn) + L-glutamine + ATP + H2O = L-asparaginyl-tRNA(Asn) + L-glutamate + ADP + phosphate + 2 H(+). In terms of biological role, allows the formation of correctly charged Asn-tRNA(Asn) or Gln-tRNA(Gln) through the transamidation of misacylated Asp-tRNA(Asn) or Glu-tRNA(Gln) in organisms which lack either or both of asparaginyl-tRNA or glutaminyl-tRNA synthetases. The reaction takes place in the presence of glutamine and ATP through an activated phospho-Asp-tRNA(Asn) or phospho-Glu-tRNA(Gln). In Gloeobacter violaceus (strain ATCC 29082 / PCC 7421), this protein is Aspartyl/glutamyl-tRNA(Asn/Gln) amidotransferase subunit B.